The following is an 83-amino-acid chain: Cytochrome b559 subunit alpha (83 aa).

The chain crosses the membrane as a helical span at residues 21–35 (VIHSITIPSLFIAGW). Residue His23 coordinates heme.

This sequence belongs to the PsbE/PsbF family. As to quaternary structure, heterodimer of an alpha subunit and a beta subunit. PSII is composed of 1 copy each of membrane proteins PsbA, PsbB, PsbC, PsbD, PsbE, PsbF, PsbH, PsbI, PsbJ, PsbK, PsbL, PsbM, PsbT, PsbX, PsbY, PsbZ, Psb30/Ycf12, at least 3 peripheral proteins of the oxygen-evolving complex and a large number of cofactors. It forms dimeric complexes. Heme b serves as cofactor.

Its subcellular location is the plastid. The protein resides in the chloroplast thylakoid membrane. This b-type cytochrome is tightly associated with the reaction center of photosystem II (PSII). PSII is a light-driven water:plastoquinone oxidoreductase that uses light energy to abstract electrons from H(2)O, generating O(2) and a proton gradient subsequently used for ATP formation. It consists of a core antenna complex that captures photons, and an electron transfer chain that converts photonic excitation into a charge separation. In Chlorella vulgaris (Green alga), this protein is Cytochrome b559 subunit alpha.